The following is a 668-amino-acid chain: Ankyrin repeat domain-containing protein OPG023 (668 aa).

ANK repeat units lie at residues 31–64 (FKNN…PLHK), 101–131 (NDFN…DFSV), 135–166 (KHHS…SVIY), 199–231 (YIIS…NPSS), 235–266 (NYCT…NTAY), 277–311 (RGIM…PHGI), 334–368 (NSDV…VVNK), 458–487 (RGET…DVNI), and 491–521 (NGYT…TLDC). Positions 586 to 666 (GNTMFSLIFT…PYTIKYKIFE (81 aa)) are PRANC/F-box-like.

Belongs to the orthopoxvirus OPG023 family. As to quaternary structure, interacts (via N-terminus) with host RELA. Interacts (via PRANC/F-box-like domain) with the SKP1 component of the host SCF ubiquitin ligase complex.

Functionally, substrate-specific adapter of SKP1-containing E3 ubiquitin-protein ligases which mediate the ubiquitination and subsequent proteasomal degradation of host target proteins. Prevents activation and subsequent nuclear localization of NF-kappa-B in infected cells, by targeting NF-kappa-B RELA subunit to the SCF E3 ligase complex. This is Ankyrin repeat domain-containing protein OPG023 (OPG023) from Bos taurus (Bovine).